The following is a 122-amino-acid chain: Small ribosomal subunit protein uS12 (122 aa).

The tract at residues 1–24 (MPTINQLIRKKRKSTGKKRTAPAL) is disordered. The span at 8 to 20 (IRKKRKSTGKKRT) shows a compositional bias: basic residues. D89 bears the 3-methylthioaspartic acid mark.

Belongs to the universal ribosomal protein uS12 family. In terms of assembly, part of the 30S ribosomal subunit. Contacts proteins S8 and S17. May interact with IF1 in the 30S initiation complex.

In terms of biological role, with S4 and S5 plays an important role in translational accuracy. Functionally, interacts with and stabilizes bases of the 16S rRNA that are involved in tRNA selection in the A site and with the mRNA backbone. Located at the interface of the 30S and 50S subunits, it traverses the body of the 30S subunit contacting proteins on the other side and probably holding the rRNA structure together. The combined cluster of proteins S8, S12 and S17 appears to hold together the shoulder and platform of the 30S subunit. This is Small ribosomal subunit protein uS12 from Natranaerobius thermophilus (strain ATCC BAA-1301 / DSM 18059 / JW/NM-WN-LF).